The following is a 297-amino-acid chain: DNA excision repair protein ERCC-1 (297 aa).

N-acetylmethionine is present on methionine 1. The segment at 1 to 39 (MDPGKDKEGVPQPSGPPARKKFVIPLDEDEVPPGVAKPL) is disordered. The Nuclear localization signal signature appears at 17–23 (PARKKFV). Residues lysine 21 and lysine 37 each participate in a glycyl lysine isopeptide (Lys-Gly) (interchain with G-Cter in SUMO2) cross-link. The DNA-binding element occupies 134-156 (QSTCALFLSLRYHNLHPDYIHGR). Residues 220-297 (ADLLMEKLEQ…VLHEPFLKVP (78 aa)) form a hhH2, dimerization with ERCC4/XPF region. Lysine 243 is covalently cross-linked (Glycyl lysine isopeptide (Lys-Gly) (interchain with G-Cter in SUMO2)).

Belongs to the ERCC1/RAD10/SWI10 family. In terms of assembly, heterodimer composed of ERCC1 isoform 1 and ERCC4/XPF. Interacts with USP45. As to quaternary structure, does not interact with ERCC4/XPF. In terms of processing, ubiquitinated with both 'Lys-48' and 'Lys-63' linkages. Deubiquitinated by USP45.

It localises to the nucleus. Its subcellular location is the cytoplasm. Functionally, non-catalytic component of a structure-specific DNA repair endonuclease responsible for the 5'-incision during DNA repair. Responsible, in conjunction with SLX4, for the first step in the repair of interstrand cross-links (ICL). Participates in the processing of anaphase bridge-generating DNA structures, which consist in incompletely processed DNA lesions arising during S or G2 phase, and can result in cytokinesis failure. Also required for homology-directed repair (HDR) of DNA double-strand breaks, in conjunction with SLX4. In terms of biological role, not functional in the nucleotide excision repair pathway. This chain is DNA excision repair protein ERCC-1 (ERCC1), found in Homo sapiens (Human).